The following is a 339-amino-acid chain: Dihydroorotase (339 aa).

2 residues coordinate Zn(2+): His-12 and His-14. Substrate contacts are provided by residues 14-16 (HVR) and Asn-40. Residues Lys-94, His-133, His-167, and Asp-239 each contribute to the Zn(2+) site. An N6-carboxylysine modification is found at Lys-94. His-133 is a substrate binding site. The active site involves Asp-239. Residues His-243 and Ala-255 each contribute to the substrate site.

It belongs to the metallo-dependent hydrolases superfamily. DHOase family. Class II DHOase subfamily. Homodimer. The cofactor is Zn(2+).

The catalysed reaction is (S)-dihydroorotate + H2O = N-carbamoyl-L-aspartate + H(+). Its pathway is pyrimidine metabolism; UMP biosynthesis via de novo pathway; (S)-dihydroorotate from bicarbonate: step 3/3. Functionally, catalyzes the reversible cyclization of carbamoyl aspartate to dihydroorotate. This Helicobacter pylori (strain HPAG1) protein is Dihydroorotase.